Reading from the N-terminus, the 1015-residue chain is Frequency clock protein (1015 aa).

8 disordered regions span residues 1-138 (MQPT…SADD), 183-285 (KRKK…QKVD), 352-383 (DFSP…TFSS), 402-465 (HVAG…DPDR), 544-614 (GRKI…VSAS), 629-668 (SPNE…NRRK), 706-728 (ERPD…GSSI), and 895-1015 (SEDD…SSQG). A compositionally biased stretch (low complexity) spans 49–68 (SAPPNDSNENSSSPRRASSG). Basic and acidic residues predominate over residues 69-80 (ESHETGQSDAKK). Polar residues predominate over residues 82–95 (FNQSNQNPTATFDS). The span at 107–117 (KESDSSNEDKP) shows a compositional bias: basic and acidic residues. 3 stretches are compositionally biased toward low complexity: residues 203–216 (SPNT…STTK), 228–267 (SGSG…SGTS), and 356–368 (QQQQ…QQQQ). Polar residues predominate over residues 369–383 (PKSNFITNPGATFSS). A compositionally biased stretch (low complexity) spans 431–442 (NSSSNGNDSGTN). Residues 443-453 (PSPPMPPPPEQ) show a composition bias toward pro residues. The segment covering 454–465 (RPTRPRDLDPDR) has biased composition (basic and acidic residues). The segment covering 556-570 (TKFSSESSGDLSQRS) has biased composition (polar residues). Positions 584–588 (HKRQK) match the Nuclear localization signal motif. Residues 590–600 (GHSTGDSGSSG) show a composition bias toward low complexity. Positions 629 to 643 (SPNEQSSMEDGTLSS) are enriched in polar residues. Acidic residues-rich tracts occupy residues 895–909 (SEDD…EFNS) and 934–946 (SGDE…EDDI). Low complexity predominate over residues 976–1003 (GSSRGRSNSASAEAVLRAGGSSAATAGG).

This sequence belongs to the FRQ family.

It localises to the nucleus. Its function is as follows. Circadian clock component involved in the generation of biological rhythms, in particular in rhythm stability, period length, and temperature compensation. Behaves as a negative element in circadian transcriptional loop. This is Frequency clock protein (FRQ) from Trichoderma spinulosum (Hypocrea spinulosa).